We begin with the raw amino-acid sequence, 594 residues long: Elongation factor 4 (594 aa).

A tr-type G domain is found at 2–184 (KNIRNFSIIA…TIVAKVPAPE (183 aa)). GTP is bound by residues 14-19 (DHGKST) and 131-134 (NKID).

This sequence belongs to the TRAFAC class translation factor GTPase superfamily. Classic translation factor GTPase family. LepA subfamily.

It is found in the cell inner membrane. The catalysed reaction is GTP + H2O = GDP + phosphate + H(+). Functionally, required for accurate and efficient protein synthesis under certain stress conditions. May act as a fidelity factor of the translation reaction, by catalyzing a one-codon backward translocation of tRNAs on improperly translocated ribosomes. Back-translocation proceeds from a post-translocation (POST) complex to a pre-translocation (PRE) complex, thus giving elongation factor G a second chance to translocate the tRNAs correctly. Binds to ribosomes in a GTP-dependent manner. This Francisella tularensis subsp. tularensis (strain WY96-3418) protein is Elongation factor 4.